The sequence spans 231 residues: MAKLAKRIQKIREGVDPTKLVALSDAISMVKERAVAKFDETIEIAMNLGVDPRHADQMVRGVVNLPNGTGRDVRVAVFARGAKADEARAAGAEVVGAEDLVEIVQGGKIDFDRCIATPDMMPLVGRLGKVLGPRGMMPNPKVGTVTMDVAGAVKASKGGAVEFRVEKAGIIHAGIGKASFEAKALEENIKAFADAVIKAKPAGAKGNYVKRVAISSTMGPGVKIDPSSVTA.

Belongs to the universal ribosomal protein uL1 family. In terms of assembly, part of the 50S ribosomal subunit.

Its function is as follows. Binds directly to 23S rRNA. The L1 stalk is quite mobile in the ribosome, and is involved in E site tRNA release. In terms of biological role, protein L1 is also a translational repressor protein, it controls the translation of the L11 operon by binding to its mRNA. This Allorhizobium ampelinum (strain ATCC BAA-846 / DSM 112012 / S4) (Agrobacterium vitis (strain S4)) protein is Large ribosomal subunit protein uL1.